A 235-amino-acid polypeptide reads, in one-letter code: MKIGIIGAIEQEIRKIKEIINNLKIKKIGNIKIYTGTFKKIEIFLILSGIGKVSASMSTTISINLFQPDFIINSGSAGSLNACLKIGDIIIPKKTCYYDVDLTNFGYSKGQIPEYPQTFKTNKNLREILKEIAVEFKFKFLTGLLVTGDSFIRKSNCIKKIKNQFSSAIGVDMESTAIGQVCHNFKIPFIIIKSISDLSDNNATSHFEKNIPIASLKSSKLVKLLLKKISSQNSI.

E12 serves as the catalytic Proton acceptor. Substrate is bound by residues G78, I152, and 173-174 (ME). D197 acts as the Proton donor in catalysis.

Belongs to the PNP/UDP phosphorylase family. MtnN subfamily. In terms of assembly, homodimer.

It carries out the reaction S-adenosyl-L-homocysteine + H2O = S-(5-deoxy-D-ribos-5-yl)-L-homocysteine + adenine. The catalysed reaction is S-methyl-5'-thioadenosine + H2O = 5-(methylsulfanyl)-D-ribose + adenine. The enzyme catalyses 5'-deoxyadenosine + H2O = 5-deoxy-D-ribose + adenine. It functions in the pathway amino-acid biosynthesis; L-methionine biosynthesis via salvage pathway; S-methyl-5-thio-alpha-D-ribose 1-phosphate from S-methyl-5'-thioadenosine (hydrolase route): step 1/2. Its function is as follows. Catalyzes the irreversible cleavage of the glycosidic bond in both 5'-methylthioadenosine (MTA) and S-adenosylhomocysteine (SAH/AdoHcy) to adenine and the corresponding thioribose, 5'-methylthioribose and S-ribosylhomocysteine, respectively. Also cleaves 5'-deoxyadenosine, a toxic by-product of radical S-adenosylmethionine (SAM) enzymes, into 5-deoxyribose and adenine. Thus, is required for in vivo function of the radical SAM enzymes biotin synthase and lipoic acid synthase, that are inhibited by 5'-deoxyadenosine accumulation. In Buchnera aphidicola subsp. Schizaphis graminum (strain Sg), this protein is 5'-methylthioadenosine/S-adenosylhomocysteine nucleosidase.